Reading from the N-terminus, the 271-residue chain is Centromere protein K (271 aa).

Coiled-coil stretches lie at residues 11-44 (DTIT…QNKL) and 102-151 (LRCD…VENQ).

The protein belongs to the CENP-K/MCM22 family. As to quaternary structure, component of the CENPA-CAD complex, composed of CENPI, CENPK, CENPL, CENPO, CENPP, CENPQ, CENPR and CENPS. The CENPA-CAD complex interacts with the CENPA-NAC complex, at least composed of CENPA, CENPC, CENPH, CENPM, CENPN, CENPT and CENPU. May interact with Sox6. Highly expressed in testis.

The protein localises to the nucleus. It localises to the chromosome. It is found in the centromere. The protein resides in the kinetochore. In terms of biological role, component of the CENPA-CAD (nucleosome distal) complex, a complex recruited to centromeres which is involved in assembly of kinetochore proteins, mitotic progression and chromosome segregation. May be involved in incorporation of newly synthesized CENPA into centromeres via its interaction with the CENPA-NAC complex. Acts in coordination with KNL1 to recruit the NDC80 complex to the outer kinetochore. The polypeptide is Centromere protein K (Cenpk) (Mus musculus (Mouse)).